A 501-amino-acid polypeptide reads, in one-letter code: Phenylalanine--tRNA ligase alpha subunit (501 aa).

L-phenylalanine is bound by residues threonine 344, 383–385, and phenylalanine 424; that span reads QID. Mg(2+) is bound at residue glutamate 426. Phenylalanine 449 is a binding site for L-phenylalanine.

It belongs to the class-II aminoacyl-tRNA synthetase family. Phe-tRNA synthetase alpha subunit type 2 subfamily. In terms of assembly, tetramer of two alpha and two beta subunits. Mg(2+) serves as cofactor.

Its subcellular location is the cytoplasm. It carries out the reaction tRNA(Phe) + L-phenylalanine + ATP = L-phenylalanyl-tRNA(Phe) + AMP + diphosphate + H(+). This Thermococcus kodakarensis (strain ATCC BAA-918 / JCM 12380 / KOD1) (Pyrococcus kodakaraensis (strain KOD1)) protein is Phenylalanine--tRNA ligase alpha subunit.